Consider the following 366-residue polypeptide: Chitoporin (366 aa).

Residues 1–23 (MDKMFKRTVIGAAVALASTGLMA) form the signal peptide.

The protein belongs to the Gram-negative porin family.

The protein localises to the cell outer membrane. Involved in the uptake of chitosugars. In Vibrio furnissii, this protein is Chitoporin (chiP).